A 541-amino-acid chain; its full sequence is Chaperonin GroEL 5 (541 aa).

Residues 30 to 33 (TLGP), G415, and D496 each bind ATP.

This sequence belongs to the chaperonin (HSP60) family. As to quaternary structure, forms a cylinder of 14 subunits composed of two heptameric rings stacked back-to-back. Interacts with the co-chaperonin GroES.

Its subcellular location is the cytoplasm. The catalysed reaction is ATP + H2O + a folded polypeptide = ADP + phosphate + an unfolded polypeptide.. In terms of biological role, together with its co-chaperonin GroES, plays an essential role in assisting protein folding. The GroEL-GroES system forms a nano-cage that allows encapsulation of the non-native substrate proteins and provides a physical environment optimized to promote and accelerate protein folding. This Bradyrhizobium diazoefficiens (strain JCM 10833 / BCRC 13528 / IAM 13628 / NBRC 14792 / USDA 110) protein is Chaperonin GroEL 5.